Reading from the N-terminus, the 226-residue chain is Lipoprotein-releasing system ATP-binding protein LolD (226 aa).

In terms of domain architecture, ABC transporter spans 6–226 (VLISGLTKTF…KLYKGNLEEV (221 aa)). Position 42–49 (42–49 (GESGSGKS)) interacts with ATP.

The protein belongs to the ABC transporter superfamily. Lipoprotein translocase (TC 3.A.1.125) family. In terms of assembly, the complex is composed of two ATP-binding proteins (LolD) and two transmembrane proteins (LolC and LolE).

The protein localises to the cell inner membrane. Functionally, part of the ABC transporter complex LolCDE involved in the translocation of mature outer membrane-directed lipoproteins, from the inner membrane to the periplasmic chaperone, LolA. Responsible for the formation of the LolA-lipoprotein complex in an ATP-dependent manner. In Treponema denticola (strain ATCC 35405 / DSM 14222 / CIP 103919 / JCM 8153 / KCTC 15104), this protein is Lipoprotein-releasing system ATP-binding protein LolD.